We begin with the raw amino-acid sequence, 236 residues long: uncharacterized protein (236 aa).

This sequence to E.coli YfjP and YkfA.

This is an uncharacterized protein from Escherichia coli (strain K12).